The following is a 197-amino-acid chain: GTP cyclohydrolase-2 (197 aa).

GTP is bound at residue 50-54 (RIHSE). 3 residues coordinate Zn(2+): C55, C66, and C68. Residues Q71, 93–95 (EGR), and T115 each bind GTP. The active-site Proton acceptor is D127. The active-site Nucleophile is the R129. The GTP site is built by T150 and K155.

Belongs to the GTP cyclohydrolase II family. Requires Zn(2+) as cofactor.

The catalysed reaction is GTP + 4 H2O = 2,5-diamino-6-hydroxy-4-(5-phosphoribosylamino)-pyrimidine + formate + 2 phosphate + 3 H(+). It participates in cofactor biosynthesis; riboflavin biosynthesis; 5-amino-6-(D-ribitylamino)uracil from GTP: step 1/4. Its function is as follows. Catalyzes the conversion of GTP to 2,5-diamino-6-ribosylamino-4(3H)-pyrimidinone 5'-phosphate (DARP), formate and pyrophosphate. In Neisseria meningitidis serogroup C (strain 053442), this protein is GTP cyclohydrolase-2.